The following is a 222-amino-acid chain: 2-hydroxy-3-keto-5-methylthiopentenyl-1-phosphate phosphatase (222 aa).

Belongs to the HAD-like hydrolase superfamily. MtnX family.

The catalysed reaction is 2-hydroxy-5-methylsulfanyl-3-oxopent-1-enyl phosphate + H2O = 1,2-dihydroxy-5-(methylsulfanyl)pent-1-en-3-one + phosphate. Its pathway is amino-acid biosynthesis; L-methionine biosynthesis via salvage pathway; L-methionine from S-methyl-5-thio-alpha-D-ribose 1-phosphate: step 4/6. Dephosphorylates 2-hydroxy-3-keto-5-methylthiopentenyl-1-phosphate (HK-MTPenyl-1-P) yielding 1,2-dihydroxy-3-keto-5-methylthiopentene (DHK-MTPene). The sequence is that of 2-hydroxy-3-keto-5-methylthiopentenyl-1-phosphate phosphatase from Brevibacillus brevis (strain 47 / JCM 6285 / NBRC 100599).